Consider the following 201-residue polypeptide: Recombination protein RecR (201 aa).

Residues 60 to 75 (CSVCGNVDSCDPCTIC) form a C4-type zinc finger. The Toprim domain occupies 83–178 (STLIVVETVG…RTTRLAHGVP (96 aa)).

The protein belongs to the RecR family.

In terms of biological role, may play a role in DNA repair. It seems to be involved in an RecBC-independent recombinational process of DNA repair. It may act with RecF and RecO. This chain is Recombination protein RecR, found in Methylocella silvestris (strain DSM 15510 / CIP 108128 / LMG 27833 / NCIMB 13906 / BL2).